We begin with the raw amino-acid sequence, 358 residues long: 3-isopropylmalate dehydrogenase (358 aa).

77-90 (GPKWTHLPPDQQPE) contributes to the NAD(+) binding site. Substrate-binding residues include arginine 98, arginine 108, arginine 137, and aspartate 226. Aspartate 226, aspartate 250, and aspartate 254 together coordinate Mg(2+). Residue 284–296 (GSAPDIAGKGIAN) coordinates NAD(+).

It belongs to the isocitrate and isopropylmalate dehydrogenases family. LeuB type 1 subfamily. Homodimer. Mg(2+) serves as cofactor. Mn(2+) is required as a cofactor.

Its subcellular location is the cytoplasm. The catalysed reaction is (2R,3S)-3-isopropylmalate + NAD(+) = 4-methyl-2-oxopentanoate + CO2 + NADH. Its pathway is amino-acid biosynthesis; L-leucine biosynthesis; L-leucine from 3-methyl-2-oxobutanoate: step 3/4. Its function is as follows. Catalyzes the oxidation of 3-carboxy-2-hydroxy-4-methylpentanoate (3-isopropylmalate) to 3-carboxy-4-methyl-2-oxopentanoate. The product decarboxylates to 4-methyl-2 oxopentanoate. The chain is 3-isopropylmalate dehydrogenase from Mannheimia succiniciproducens (strain KCTC 0769BP / MBEL55E).